Reading from the N-terminus, the 134-residue chain is D-ribose pyranase (134 aa).

His-20 functions as the Proton donor in the catalytic mechanism. Substrate contacts are provided by residues Asp-28, His-101, and 123–125; that span reads YCN.

The protein belongs to the RbsD / FucU family. RbsD subfamily. As to quaternary structure, homodecamer.

Its subcellular location is the cytoplasm. It carries out the reaction beta-D-ribopyranose = beta-D-ribofuranose. It participates in carbohydrate metabolism; D-ribose degradation; D-ribose 5-phosphate from beta-D-ribopyranose: step 1/2. Catalyzes the interconversion of beta-pyran and beta-furan forms of D-ribose. This Pseudomonas fluorescens (strain SBW25) protein is D-ribose pyranase.